Here is a 176-residue protein sequence, read N- to C-terminus: Peptidyl-prolyl cis-trans isomerase CYP19-3 (176 aa).

One can recognise a PPIase cyclophilin-type domain in the interval 7–170 (FFDILIGKMK…ERVVIEDCGE (164 aa)).

This sequence belongs to the cyclophilin-type PPIase family. In terms of tissue distribution, ubiquitous, with highest levels in flowers and lowest levels in roots.

Its subcellular location is the cytoplasm. It carries out the reaction [protein]-peptidylproline (omega=180) = [protein]-peptidylproline (omega=0). With respect to regulation, binds cyclosporin A (CsA). CsA mediates some of its effects via an inhibitory action on PPIase. In terms of biological role, PPIases accelerate the folding of proteins. It catalyzes the cis-trans isomerization of proline imidic peptide bonds in oligopeptides. The chain is Peptidyl-prolyl cis-trans isomerase CYP19-3 (CYP19-3) from Arabidopsis thaliana (Mouse-ear cress).